We begin with the raw amino-acid sequence, 358 residues long: Fructose-bisphosphate aldolase 1, cytoplasmic (358 aa).

Position 39 (Arg-39) interacts with substrate. Glu-183 serves as the catalytic Proton acceptor. Catalysis depends on Lys-225, which acts as the Schiff-base intermediate with dihydroxyacetone-P. Residues 266 to 268 (SGG) and Arg-298 contribute to the substrate site.

It belongs to the class I fructose-bisphosphate aldolase family. In terms of assembly, homotetramer. As to expression, expressed in callus.

Its subcellular location is the cytoplasm. It is found in the cytosol. The catalysed reaction is beta-D-fructose 1,6-bisphosphate = D-glyceraldehyde 3-phosphate + dihydroxyacetone phosphate. It functions in the pathway carbohydrate degradation; glycolysis; D-glyceraldehyde 3-phosphate and glycerone phosphate from D-glucose: step 4/4. Fructose-bisphosphate aldolase that plays a key role in glycolysis and gluconeogenesis. Involved in gibberellin-mediated root growth. May be regulated by CDPK13. Associates with vacuolar proton ATPase (V-ATPase) and may regulate the V-ATPase-mediated control of root cell elongation. This Oryza sativa subsp. japonica (Rice) protein is Fructose-bisphosphate aldolase 1, cytoplasmic.